A 592-amino-acid polypeptide reads, in one-letter code: MWRTRWEDGAPTFTRNDEFLYCHTRYETFLRVMGDFQGIFECQYSADVLRDWVRNHVDQVLSLGIPHNWFLQVRPGSTMPELRDQLLDDVICCPERLIVLGKCVIMVDDHYEETELVLCMGGGTRLYIYEPSQEILLLCARHLDELARYGMMYTEAVYRQPQTPFATRVPHDVVAMLLRHGHDTDALAACVGEHHGRDVNFHTPGRHAKTLKLLTSFGCLTDCWPFEVAPAARLAECEMYVTLQLRCRWYLLGAVGSYRAGGFFDTSFLIIFDRFCRFYVVIVKSHLDRSPPLQRLAGEIYRLADSLEELFRAGLMKVYVRRRYEHGLRRAARLERNGGCVHMGEAARLHFTMFDSGVDRDYARQFRWLCRGDRFRAEMLNNWDGWDAFTIWQARVVRGDFAERRRPRSLGDGEEEDEGNDGRAMPVVRRRPPPMPRDDDEDNHVVPDNQNLEVIHDALADDEEQGEDDDDSGAEPMEPEENNVVPNVDRRGGEDAVAARMAAGHESDDDEWEDLGFDLEEDTVFDLKDVDEWFEQRRLAEKERWHLGQRIVNAYRTEAEVSEAEVEARRINLNTDLSPEWVKSFDFREHFV.

Positions 407 to 491 are disordered; sequence PRSLGDGEEE…NNVVPNVDRR (85 aa). Residues 460–481 show a composition bias toward acidic residues; that stretch reads ADDEEQGEDDDDSGAEPMEPEE.

This sequence belongs to the herpesviridae US22 family.

The protein resides in the virion tegument. This is Protein US23 (US23) from Homo sapiens (Human).